The primary structure comprises 360 residues: MSESVANRAVVFYNNKSLPIISSEELNLDSCYSSSEVVIRVHAAALNPVDFLLQSFAYSWLVGRGPKTFSRDYSGEVVRAGANVKDFKVGDKVSGLFQHLYGKQGTLCDYLILDPVKQPAISKLAAAGHAEYDDYVVNAAWPLVFGTAYQGLTNFGQKLGPDSKILVIGASTSVSNAFVQIAKNHLKVGTVVGICSKKSFDYNKKLGYDYLAAYDDGSVVDSVKDIIGKNLNNEKFDLIFDSVGNSDFFGCINDVLKDKGQNSQFVSLTGDKKMNYSSPRIWDSLPGLESLKRYGPFRKYNYNLFMLRSDSAFMKLGYEMISEKQYMPAIDSVYSFDDYAKAFERVKSNRSKGKVVIKIH.

It belongs to the YIM1 family.

It is found in the lipid droplet. It localises to the mitochondrion. This Lachancea thermotolerans (strain ATCC 56472 / CBS 6340 / NRRL Y-8284) (Yeast) protein is Protein YIM1-1 (YIM1-1).